A 227-amino-acid chain; its full sequence is Cytochrome c oxidase subunit 2 (227 aa).

The Mitochondrial intermembrane segment spans residues 1-14 (MAYPFQLGLQDATS). Residues 15–45 (PIMEELLHFHDHTLMIVFLISSLVLYIISSM) traverse the membrane as a helical segment. Over 46-59 (LTTKLTHTSTMDAQ) the chain is Mitochondrial matrix. Residues 60–87 (EVETVWTILPAIILVLIALPSLRILYMM) traverse the membrane as a helical segment. Residues 88 to 227 (DEINNPSLTV…YFETWSALML (140 aa)) lie on the Mitochondrial intermembrane side of the membrane. Residues His-161, Cys-196, Glu-198, Cys-200, His-204, and Met-207 each contribute to the Cu cation site. Glu-198 is a binding site for Mg(2+). Tyr-218 carries the phosphotyrosine modification.

The protein belongs to the cytochrome c oxidase subunit 2 family. As to quaternary structure, component of the cytochrome c oxidase (complex IV, CIV), a multisubunit enzyme composed of 14 subunits. The complex is composed of a catalytic core of 3 subunits MT-CO1, MT-CO2 and MT-CO3, encoded in the mitochondrial DNA, and 11 supernumerary subunits COX4I, COX5A, COX5B, COX6A, COX6B, COX6C, COX7A, COX7B, COX7C, COX8 and NDUFA4, which are encoded in the nuclear genome. The complex exists as a monomer or a dimer and forms supercomplexes (SCs) in the inner mitochondrial membrane with NADH-ubiquinone oxidoreductase (complex I, CI) and ubiquinol-cytochrome c oxidoreductase (cytochrome b-c1 complex, complex III, CIII), resulting in different assemblies (supercomplex SCI(1)III(2)IV(1) and megacomplex MCI(2)III(2)IV(2)). Found in a complex with TMEM177, COA6, COX18, COX20, SCO1 and SCO2. Interacts with TMEM177 in a COX20-dependent manner. Interacts with COX20. Interacts with COX16. It depends on Cu cation as a cofactor.

It localises to the mitochondrion inner membrane. It carries out the reaction 4 Fe(II)-[cytochrome c] + O2 + 8 H(+)(in) = 4 Fe(III)-[cytochrome c] + 2 H2O + 4 H(+)(out). Functionally, component of the cytochrome c oxidase, the last enzyme in the mitochondrial electron transport chain which drives oxidative phosphorylation. The respiratory chain contains 3 multisubunit complexes succinate dehydrogenase (complex II, CII), ubiquinol-cytochrome c oxidoreductase (cytochrome b-c1 complex, complex III, CIII) and cytochrome c oxidase (complex IV, CIV), that cooperate to transfer electrons derived from NADH and succinate to molecular oxygen, creating an electrochemical gradient over the inner membrane that drives transmembrane transport and the ATP synthase. Cytochrome c oxidase is the component of the respiratory chain that catalyzes the reduction of oxygen to water. Electrons originating from reduced cytochrome c in the intermembrane space (IMS) are transferred via the dinuclear copper A center (CU(A)) of subunit 2 and heme A of subunit 1 to the active site in subunit 1, a binuclear center (BNC) formed by heme A3 and copper B (CU(B)). The BNC reduces molecular oxygen to 2 water molecules using 4 electrons from cytochrome c in the IMS and 4 protons from the mitochondrial matrix. The protein is Cytochrome c oxidase subunit 2 (MT-CO2) of Speothos venaticus (Bush dog).